A 93-amino-acid chain; its full sequence is Early nodulin-36B (93 aa).

This Glycine max (Soybean) protein is Early nodulin-36B.